The following is a 1041-amino-acid chain: Putative transcription elongation factor SPT5 homolog 1 (1041 aa).

The disordered stretch occupies residues 1-133 (MPRSRDEDDE…ERGDRRYERR (133 aa)). Acidic residues-rich tracts occupy residues 7-32 (EDDE…EEEE), 53-69 (DYAE…DEDY), and 99-114 (DDED…DDFI). S59 is modified (phosphoserine). Over residues 122–133 (PDERGDRRYERR) the composition is skewed to basic and acidic residues. KOW domains lie at 273–300 (DLSR…VDNV), 425–452 (HFMK…VDEE), 477–504 (YFEP…VDQH), and 601–628 (VIAV…IYKG). 2 disordered regions span residues 662 to 713 (NRNG…GDDS) and 768 to 921 (DTSR…GTGL). Positions 691–703 (GRGGGYNNSGGRH) are enriched in gly residues. In terms of domain architecture, KOW 5 spans 712 to 739 (DSLLGTTVKIRLGPFKGYRGPVVEVKGN). Basic and acidic residues predominate over residues 804–814 (DGMRTPMRDRA). Composition is skewed to polar residues over residues 835–844 (SWGTSPQYQP) and 893–904 (TPGQPMTPSSAS). One can recognise a KOW 6 domain in the interval 988–1015 (PPRKSDRVKIVGGQYRGSTGKLIGIDGS).

It belongs to the SPT5 family.

The protein resides in the nucleus. In terms of biological role, may regulate transcription elongation by RNA polymerase II. May enhance transcriptional pausing at sites proximal to the promoter, which may in turn facilitate the assembly of an elongation competent RNA polymerase II complex. The chain is Putative transcription elongation factor SPT5 homolog 1 from Arabidopsis thaliana (Mouse-ear cress).